Here is a 134-residue protein sequence, read N- to C-terminus: Large ribosomal subunit protein bL17 (134 aa).

It belongs to the bacterial ribosomal protein bL17 family. In terms of assembly, part of the 50S ribosomal subunit. Contacts protein L32.

The chain is Large ribosomal subunit protein bL17 from Anaplasma marginale (strain Florida).